Reading from the N-terminus, the 229-residue chain is DNA mismatch repair protein MutH (229 aa).

This sequence belongs to the MutH family.

The protein localises to the cytoplasm. Sequence-specific endonuclease that cleaves unmethylated GATC sequences. It is involved in DNA mismatch repair. This is DNA mismatch repair protein MutH from Shigella flexneri serotype 5b (strain 8401).